The chain runs to 131 residues: Large ribosomal subunit protein bL17 (131 aa).

Belongs to the bacterial ribosomal protein bL17 family. In terms of assembly, part of the 50S ribosomal subunit. Contacts protein L32.

The protein is Large ribosomal subunit protein bL17 of Shewanella amazonensis (strain ATCC BAA-1098 / SB2B).